The primary structure comprises 697 residues: MADLEKILERLGISPEKRCQVIKKEQVVRNMEKIFLGRDLSNRLLYTLACIAPKNADLGLLADLVDARVIKHESMLKECLRYTEKKDVSMEEMTRFVKRNEVSSEDVRKFVAKMRSDRVAKKDMVSKARKAMPCADFRVVVEEINKVPDDVDGGDEKRPLEGGWLEEGEIKKLPKPSEIPQINEEIRQAHLRRTGGRVVTRFPPEPNGILHIGHAKAINLNFEYAKKFGGYTYLRYDDTNPKNEEAEYFDSIYEDVRWLGFEPYKVTASSDYFDKMTEFGFQLIRKGKAYVCHLSQDEICERRRQYVSDGTNDRSHLSQYRDRPVSENLRLFQEMVDGKWEEGKACLRFKMDTDTKNPLMLDLVGIRILDVVHPRKNVKYTVYPTYEFALCVSDSLEDVTHSFCTREFYTRQESYNWLLVQLEIYKPIQWEFSRLNISNTVLSKRKLLPLKKYGIELDDPRLFTIKGMRRRGFPPEAINQFCRSLGFTFAETTVDVKKLENFVRDNLNRTSRRIMCVKEPLKVTIMNSTPCSISIPDLPGSSVVRDVPFTPVIYIEKSDFMEKGDKDFLRLTPEQPVGLYMLYPIRVVKVTPDGIVAERWDGVPRKFIHWVSEDSVEVEMRMYSSLWTSFSPKDATYLEEMNKDSLKVFHGLCDKRISDARIEDRFQFQRIGYFCVDKDTTKENIVVNLTIPLKNIA.

The 'HIGH' region signature appears at 204-214 (PEPNGILHIGH). Residues 205-207 (EPN) and 211-217 (HIGHAKA) each bind ATP. Positions 237 and 386 each coordinate L-glutamine. Residues T405, 434–435 (RL), and 442–444 (LSK) each bind ATP. The 'KMSKS' region motif lies at 441–445 (VLSKR).

Belongs to the class-I aminoacyl-tRNA synthetase family.

The catalysed reaction is tRNA(Gln) + L-glutamine + ATP = L-glutaminyl-tRNA(Gln) + AMP + diphosphate. The chain is Probable glutamine--tRNA ligase from Encephalitozoon cuniculi (strain GB-M1) (Microsporidian parasite).